Here is a 529-residue protein sequence, read N- to C-terminus: Non-reducing end alpha-L-arabinofuranosidase BoGH43B (529 aa).

Positions 1–23 (MMKNSCRLLLILIGLWMANVSLA) are cleaved as a signal peptide. Residue D38 is the Proton acceptor of the active site. E198 functions as the Proton donor in the catalytic mechanism.

The protein belongs to the glycosyl hydrolase 43 family.

Its subcellular location is the periplasm. It catalyses the reaction Hydrolysis of terminal non-reducing alpha-L-arabinofuranoside residues in alpha-L-arabinosides.. Its pathway is glucan metabolism; xyloglucan degradation. In terms of biological role, alpha-L-arabinofuranosidase involved in xyloglucan degradation by mediating the cleavage of terminal non-reducing alpha-L-arabinofuranoside residues in xyloglucan branches, converting the 'S' units to 'X' units. The protein is Non-reducing end alpha-L-arabinofuranosidase BoGH43B of Bacteroides ovatus (strain ATCC 8483 / DSM 1896 / JCM 5824 / BCRC 10623 / CCUG 4943 / NCTC 11153).